The sequence spans 872 residues: Lysosomal cholesterol signaling protein (872 aa).

Residues 1–40 (MNSFSNLPAENLTIAVNMTKTLPTAVMHGFNSTNDPPSMS) lie on the Lumenal side of the membrane. Positions 3 to 372 (SFSNLPAENL…SAWLLTFPTM (370 aa)) are PIN-like transporter. N-linked (GlcNAc...) asparagine glycans are attached at residues asparagine 11, asparagine 17, and asparagine 31. The helical transmembrane segment at 41–61 (ITRLFPALLECFGIVLCGYIA) threads the bilayer. 2 residues coordinate cholesterol: phenylalanine 45 and tyrosine 59. The Cytoplasmic portion of the chain corresponds to 62–81 (GRANVITSTQAKGLGNFVSR). Residues 82-102 (FALPALLFKNMVVLNFSNVDW) form a helical membrane-spanning segment. The Lumenal segment spans residues 103–106 (SFLY). The helical transmembrane segment at 107-127 (SILIAKASVFFIVCVLTLLVA) threads the bilayer. Residues 128–135 (SPDSRFSK) are Cytoplasmic-facing. Residues 136-156 (AGLFPIFATQSNDFALGYPIV) traverse the membrane as a discontinuously helical segment. The Lumenal portion of the chain corresponds to 157 to 169 (EALYQTTYPEYLQ). The helical transmembrane segment at 170–190 (YIYLVAPISLMMLNPIGFIFC) threads the bilayer. Over 191 to 215 (EIQKWKDTQNASQNKIKIVGLGLLR) the chain is Cytoplasmic. Residues 216 to 236 (VLQNPIVFMVFIGIAFNFILD) traverse the membrane as a discontinuously helical segment. Residues 237–245 (RKVPVYVEN) are Lumenal-facing. Residues 246–266 (FLDGLGNSFSGSALFYLGLTM) traverse the membrane as a discontinuously helical segment. Over 267-275 (VGKIKRLKK) the chain is Cytoplasmic. Cholesterol-binding residues include glycine 268, lysine 269, and isoleucine 270. A helical membrane pass occupies residues 276-296 (SAFVVLILLITAKLLVLPLLC). Over 297 to 317 (REMVELLDKGDSVVNHTSLSN) the chain is Lumenal. A glycan (N-linked (GlcNAc...) asparagine) is linked at asparagine 311. A discontinuously helical membrane pass occupies residues 318–338 (YAFLYGVFPVAPGVAIFATQF). At 339–348 (NMEVEIITSG) the chain is on the cytoplasmic side. The helical transmembrane segment at 349 to 369 (MVISTFVSAPIMYVSAWLLTF) threads the bilayer. At 370–383 (PTMDPKPLAYAIQN) the chain is on the lumenal side. A GPCR region spans residues 382 to 719 (QNVSFDISIV…FGIFGLDKHL (338 aa)). Asparagine 383 carries an N-linked (GlcNAc...) asparagine glycan. The helical transmembrane segment at 384–404 (VSFDISIVSLISLIWSQAILL) threads the bilayer. Residues 405–416 (LSKKYKQLPHML) lie on the Cytoplasmic side of the membrane. Residues 417–437 (TTNLLIAQSIVCAGMMIWNFV) traverse the membrane as a helical segment. Residues 438–440 (KEK) lie on the Lumenal side of the membrane. A helical membrane pass occupies residues 441–461 (NFVGQILVFVLLYSSLYSTYL). Topologically, residues 462–482 (WTGLLAISLFLLKKRERVQIP) are cytoplasmic. A helical membrane pass occupies residues 483-503 (VGIIIISGWGIPALLVGVLLI). At 504-522 (TGKHSGDSIDSAFFYGKEQ) the chain is on the lumenal side. The chain crosses the membrane as a helical span at residues 523 to 543 (MITTAVTLFCSILIAGISLMC). Over 544 to 662 (MNRTAQAGSY…GDQQLTRHVL (119 aa)) the chain is Cytoplasmic. Arginine 659 serves as a coordination point for cholesterol. Residues 663–683 (LCLLLIIGLFANLSSCLWWLF) form a helical membrane-spanning segment. The Lumenal portion of the chain corresponds to 684-693 (NQEPGRLYVE). Residues 694-714 (LQFFCAVFNFGQGFISFGIFG) traverse the membrane as a helical segment. At 715-872 (LDKHLIILPF…SSPPSHSPKT (158 aa)) the chain is on the cytoplasmic side. A DEP domain is found at 759–837 (YHRDLCIRNI…DEYLFYRFLQ (79 aa)).

As to quaternary structure, homodimer; via the transporter region and DEP domain. Interacts with the GATOR1 complex; preventing interaction between GATOR1 and KICSTOR; interaction is disrupted upon cholesterol starvation.

It is found in the lysosome membrane. Functionally, cholesterol-binding protein that acts as a regulator of mTORC1 signaling pathway. Acts as a sensor of cholesterol to signal cholesterol sufficiency to mTORC1: in presence of cholesterol, binds cholesterol, leading to disruption of the interaction between the GATOR1 and KICSTOR complexes and promotion of mTORC1 signaling. Upon cholesterol starvation, GPR155/LYCHOS is unable to perturb the association between GATOR1 and KICSTOR, leading to mTORC1 signaling inhibition. Binds indole-3-acetic acid and may play a role in tryptophan metabolism. This Pongo abelii (Sumatran orangutan) protein is Lysosomal cholesterol signaling protein (GPR155).